Reading from the N-terminus, the 544-residue chain is Chaperonin GroEL (544 aa).

ATP is bound by residues threonine 30–proline 33, lysine 51, aspartate 87–threonine 91, glycine 415, aspartate 480–alanine 482, and aspartate 496.

This sequence belongs to the chaperonin (HSP60) family. As to quaternary structure, forms a cylinder of 14 subunits composed of two heptameric rings stacked back-to-back. Interacts with the co-chaperonin GroES.

Its subcellular location is the cytoplasm. It carries out the reaction ATP + H2O + a folded polypeptide = ADP + phosphate + an unfolded polypeptide.. Together with its co-chaperonin GroES, plays an essential role in assisting protein folding. The GroEL-GroES system forms a nano-cage that allows encapsulation of the non-native substrate proteins and provides a physical environment optimized to promote and accelerate protein folding. This Sulfurihydrogenibium sp. (strain YO3AOP1) protein is Chaperonin GroEL.